Consider the following 193-residue polypeptide: Large ribosomal subunit protein bL25 (193 aa).

It belongs to the bacterial ribosomal protein bL25 family. CTC subfamily. In terms of assembly, part of the 50S ribosomal subunit; part of the 5S rRNA/L5/L18/L25 subcomplex. Contacts the 5S rRNA. Binds to the 5S rRNA independently of L5 and L18.

Its function is as follows. This is one of the proteins that binds to the 5S RNA in the ribosome where it forms part of the central protuberance. This Lachnoclostridium phytofermentans (strain ATCC 700394 / DSM 18823 / ISDg) (Clostridium phytofermentans) protein is Large ribosomal subunit protein bL25.